We begin with the raw amino-acid sequence, 201 residues long: U1 small nuclear ribonucleoprotein C (201 aa).

The segment at 4–36 (YYCEYCDIYLTHSSPVGRRQHNQGRKHISAKIE) adopts a Matrin-type zinc-finger fold. Residues 137 to 154 (IQKPYNNFDNKNNNYNNK) show a composition bias toward low complexity. The disordered stretch occupies residues 137 to 176 (IQKPYNNFDNKNNNYNNKPITNSSYKNDKQDYRNNNENND).

This sequence belongs to the U1 small nuclear ribonucleoprotein C family. As to quaternary structure, U1 snRNP is composed of the 7 core Sm proteins B/B', D1, D2, D3, E, F and G that assemble in a heptameric protein ring on the Sm site of the small nuclear RNA to form the core snRNP, and at least 3 U1 snRNP-specific proteins U1-70K, U1-A and U1-C. U1-C interacts with U1 snRNA and the 5' splice-site region of the pre-mRNA.

The protein resides in the nucleus. Component of the spliceosomal U1 snRNP, which is essential for recognition of the pre-mRNA 5' splice-site and the subsequent assembly of the spliceosome. U1-C is directly involved in initial 5' splice-site recognition for both constitutive and regulated alternative splicing. The interaction with the 5' splice-site seems to precede base-pairing between the pre-mRNA and the U1 snRNA. Stimulates commitment or early (E) complex formation by stabilizing the base pairing of the 5' end of the U1 snRNA and the 5' splice-site region. This Plasmodium yoelii yoelii protein is U1 small nuclear ribonucleoprotein C.